The primary structure comprises 139 residues: Small ribosomal subunit protein uS12 (139 aa).

The interval 1 to 21 is disordered; the sequence is MPTINQLVRKGRKAVQEKSTA. The residue at position 102 (D102) is a 3-methylthioaspartic acid.

It belongs to the universal ribosomal protein uS12 family. As to quaternary structure, part of the 30S ribosomal subunit. Contacts proteins S8 and S17. May interact with IF1 in the 30S initiation complex.

Its function is as follows. With S4 and S5 plays an important role in translational accuracy. Interacts with and stabilizes bases of the 16S rRNA that are involved in tRNA selection in the A site and with the mRNA backbone. Located at the interface of the 30S and 50S subunits, it traverses the body of the 30S subunit contacting proteins on the other side and probably holding the rRNA structure together. The combined cluster of proteins S8, S12 and S17 appears to hold together the shoulder and platform of the 30S subunit. In Alkaliphilus metalliredigens (strain QYMF), this protein is Small ribosomal subunit protein uS12.